Here is a 258-residue protein sequence, read N- to C-terminus: MTSFTGITAVANATNEMAMFKQAMKEVAAHPEWMSSRQIERQRWNPYSMEGGSTCAISGENFAIVASDTRMTQNDINILTRDAEKIQILNDNIILTTSGFYGDVLQLKKVLQSRLHKYRFDYRSDMSVDLCAELLSRNLYYRRFFPYYTGAILAGIDEHGKGAVFSYDPIGCIERLGYSASGAAEPMIIPFLDCQIGHVTLSEGYERPELTLDRAISLMKDSFRGAAEREISTGDKIHLVIAEAGKPVVVKFLPLRED.

It belongs to the peptidase T1B family. In terms of assembly, the 26S proteasome consists of a 20S proteasome core and two 19S regulatory subunits. The 20S proteasome core is composed of 28 subunits that are arranged in four stacked rings, resulting in a barrel-shaped structure. The two end rings are each formed by seven alpha subunits, and the two central rings are each formed by seven beta subunits. The catalytic chamber with the active sites is on the inside of the barrel.

Its subcellular location is the cytoplasm. The protein localises to the nucleus. Its function is as follows. Non-catalytic component of the proteasome, a multicatalytic proteinase complex which is characterized by its ability to cleave peptides with Arg, Phe, Tyr, Leu, and Glu adjacent to the leaving group at neutral or slightly basic pH. The proteasome has an ATP-dependent proteolytic activity. This is Proteasome subunit beta type-1 (pbs-6) from Caenorhabditis elegans.